An 84-amino-acid polypeptide reads, in one-letter code: Putative membrane protein insertion efficiency factor (84 aa).

The protein belongs to the UPF0161 family.

Its subcellular location is the cell inner membrane. Functionally, could be involved in insertion of integral membrane proteins into the membrane. This is Putative membrane protein insertion efficiency factor from Nostoc sp. (strain PCC 7120 / SAG 25.82 / UTEX 2576).